The chain runs to 295 residues: Tyrosine transport system permease protein (295 aa).

Transmembrane regions (helical) follow at residues 3–23 (GIISVMTQSLILSIMALGVYI), 57–77 (VVATLMAILCGCTAGLVTGIL), 81–101 (FKISNLLSGILVMGMLYSINL), 122–142 (ISPIVLALAFVFICKILLDLF), 173–193 (ILGLMISNGLIALSGSLMAQF), 200–220 (NMGIGTLVLGIASIIIGITLF), 232–252 (IIVGSFIYQFTIYFAMSLGML), and 256–276 (LKLITAIVIIAFLATGNLNIS).

It belongs to the binding-protein-dependent transport system permease family. As to quaternary structure, the complex is probably composed of two ATP-binding proteins (CDR20291_0806), two transmembrane proteins (CDR20291_0807) and a solute-binding protein (CDR20291_0805).

The protein resides in the cell membrane. In terms of biological role, probably part of an ABC transporter complex involved in tyrosine uptake. May also import phenylalanine. Probably responsible for the translocation of the substrate across the membrane. The sequence is that of Tyrosine transport system permease protein from Clostridioides difficile (strain R20291) (Peptoclostridium difficile).